Reading from the N-terminus, the 131-residue chain is Photosystem II reaction center Psb28 protein (131 aa).

The disordered stretch occupies residues 110-131 (NGLGYSQNQKSDQTDAATEEQA). Over residues 112–125 (LGYSQNQKSDQTDA) the composition is skewed to polar residues.

The protein belongs to the Psb28 family. Part of the photosystem II complex.

It localises to the cellular thylakoid membrane. This Synechococcus sp. (strain CC9902) protein is Photosystem II reaction center Psb28 protein.